The sequence spans 69 residues: Amphipathic peptide Hp1404 (69 aa).

An N-terminal signal peptide occupies residues 1-23 (MKTQFAILMITVVLMQMLVQTEG). At Phe37 the chain carries Phenylalanine amide. A propeptide spanning residues 41–69 (GLKNLDQLDDSFDSDLSDADVKLLREMFK) is cleaved from the precursor.

The protein belongs to the non-disulfide-bridged peptide (NDBP) superfamily. Short antimicrobial peptide (group 4) family. Expressed by the venom gland.

It localises to the secreted. The protein resides in the target cell membrane. Its activity is regulated as follows. Antibacterial activity is decreased by serum. Antimicrobial peptide that acts by inducing concentration-dependent membrane disruption, implying a membrane-lytic mode of action. Acts with potent activity against Gram-positive bacteria (MIC=4.04-16.16 uM) including methicillin-resistant S.aureus (MRSA). Its activity on Gram-negative bacteria is controversial. Li and colleagues (2014) describe no activity towards E.coli and P.aeruginosa, while Kim and colleagues (2018) describe a potent activity towards P.aeruginosa (MIC=3.13-12.5 uM), and Luo and colleagues (2021) describe a potent activity against antibiotic-sensitive and -resistant Acinetobacter baumannii strains (MIC=3.2-10 uM). On S.aureus, possibly acts by impairing an unknown intracellular target and/or by interacting with the membrane, leading to the lateral expansion of the membrane area at high MIC concentrations, resulting in the formation of mesosome-like structures that leads to cell lysis. Shows moderate inhibition of P.aeruginosa biofilm formation. Administration of this peptide at sub-MIC concentrations in multiple treatments does not lead to resistance in S.aureus. Exhibits low toxicity and hemolytic activity against mammalian cell lines and BALB/c mice. In vivo, improves the survival rate of the MRSA infected BALB/c mice in the peritonitis model. This Heterometrus petersii (Asian forest scorpion) protein is Amphipathic peptide Hp1404.